The sequence spans 124 residues: Putative calmodulin-3 (124 aa).

4 consecutive EF-hand domains span residues 1-18 (GCIT…LGQN), 19-54 (PTEA…KIKD), 56-91 (DFEE…LGEK), and 92-124 (LTDE…MMAK). Ca(2+) contacts are provided by Cys-2, Glu-7, Asp-32, Asp-34, Asn-36, Thr-38, Glu-43, Asp-69, Asp-71, Asn-73, and Glu-80. An N6,N6,N6-trimethyllysine modification is found at Lys-91. Residues Asp-105, Asp-107, Asp-109, Gln-111, and Glu-116 each contribute to the Ca(2+) site.

The protein belongs to the calmodulin family. Not detected in the organs tested.

In terms of biological role, calmodulin mediates the control of a large number of enzymes, ion channels and other proteins by Ca(2+). Among the enzymes to be stimulated by the calmodulin-Ca(2+) complex are a number of protein kinases and phosphatases. The protein is Putative calmodulin-3 (PCM3) of Solanum tuberosum (Potato).